Consider the following 147-residue polypeptide: MVYFTAEEKAAITSLWGKVNVEEAGGKALGRLLIVYPWTQRFFDKFGNLSSASAIMGNPKIKAHGKKVLNSFGDAVENPDNLKGTFAKLSELHCDKLLVDPEDFRLLGNVIVIVLANHFGKEFTPQVQAAWQKMVTGVASALARKYH.

A Globin domain is found at 3–147; the sequence is YFTAEEKAAI…VASALARKYH (145 aa). Positions 64 and 93 each coordinate heme b.

The protein belongs to the globin family. As to quaternary structure, heterotetramer of two alpha chains and two gamma chains in fetal hemoglobin (Hb F). As to expression, red blood cells.

Its function is as follows. Gamma chains make up the fetal hemoglobin F, in combination with alpha chains. This is Hemoglobin subunit gamma (HBG) from Dugong dugon (Dugong).